Consider the following 515-residue polypeptide: Brahma-associated protein of 60 kDa (515 aa).

The segment at 1 to 124 (MSQRFAPGQA…GGSKSDFATA (124 aa)) is disordered. Pro residues predominate over residues 17–34 (QPPPPAPGMRPYPPPGAS). A compositionally biased stretch (low complexity) spans 49-62 (PVPGTANVAGVPGV). A compositionally biased stretch (gly residues) spans 90-103 (TGAGGGGVGSGGGS). The DNA-binding stretch occupies residues 116-204 (GSKSDFATAK…SKEPTNDGEE (89 aa)). Residues 291-368 (YQPLQFKLDP…PQRLNPLLHP (78 aa)) form the SWIB/MDM2 domain.

In terms of assembly, there are 2 distinct Brahma complexes in the fruit fly, the Brahma-associated proteins (BAP) and Polybromo-containing BAP (PBAP) complexes, which are composed of common subunits Brm, Mor, Snr1/Bap45, Bap111/Dalo, Bap55, Bap60 and Act42A/Bap47, and additional signature subunits osa in the BAP complex and Polybromo and Bap170 in the PBAP complex. Interacts with sisA and sc. Interacts with mor. Interacts with p53. Interacts with erm (via N-terminal). Interacts with akirin; interaction is immune stimulation-dependent; activates selected Rel target gene promoters.

Functionally, involved in the recruitment and site-specific anchoring of the Brahma complex at specific promoter sites. The Brahma complex is a multiprotein complex which is the equivalent of the yeast SWI/SNF complex and acts by remodeling the chromatin by catalyzing an ATP-dependent alteration in the structure of nucleosomal DNA. This complex can both serve as a transcriptional coactivator or corepressor, depending on the context. Participates in X-chromosomal dosage compensation. Participates in neurogenesis. This Drosophila melanogaster (Fruit fly) protein is Brahma-associated protein of 60 kDa (Bap60).